Consider the following 282-residue polypeptide: 40S small subunit processome assembly factor 1 (282 aa).

Disordered stretches follow at residues tyrosine 27–proline 98 and phenylalanine 121–lysine 143. The segment covering lysine 48–alanine 59 has biased composition (basic and acidic residues). A phosphoserine mark is found at serine 67 and serine 75. Positions serine 89–proline 98 are enriched in low complexity. Positions lysine 131 to lysine 143 are enriched in basic and acidic residues. N6-acetyllysine is present on lysine 173. The segment covering glutamate 208 to phenylalanine 226 has biased composition (basic and acidic residues). A disordered region spans residues glutamate 208–alanine 254. Serine 268 carries the post-translational modification Phosphoserine.

As to quaternary structure, part of the small subunit (SSU) processome, composed of more than 70 proteins and the RNA chaperone small nucleolar RNA (snoRNA) U3.

Its subcellular location is the chromosome. The protein localises to the nucleus. The protein resides in the nucleolus. In terms of biological role, part of the small subunit (SSU) processome, first precursor of the small eukaryotic ribosomal subunit. During the assembly of the SSU processome in the nucleolus, many ribosome biogenesis factors, an RNA chaperone and ribosomal proteins associate with the nascent pre-rRNA and work in concert to generate RNA folding, modifications, rearrangements and cleavage as well as targeted degradation of pre-ribosomal RNA by the RNA exosome. Prevents helicase DHX37 to be recruited before post-A1 state. This is 40S small subunit processome assembly factor 1 from Rattus norvegicus (Rat).